The following is a 475-amino-acid chain: UDP-N-acetylmuramate--L-alanine ligase (475 aa).

114-120 (GTHGKTT) is an ATP binding site.

The protein belongs to the MurCDEF family.

It localises to the cytoplasm. The enzyme catalyses UDP-N-acetyl-alpha-D-muramate + L-alanine + ATP = UDP-N-acetyl-alpha-D-muramoyl-L-alanine + ADP + phosphate + H(+). The protein operates within cell wall biogenesis; peptidoglycan biosynthesis. Cell wall formation. The chain is UDP-N-acetylmuramate--L-alanine ligase from Bartonella tribocorum (strain CIP 105476 / IBS 506).